A 93-amino-acid polypeptide reads, in one-letter code: uncharacterized protein (93 aa).

It is found in the plastid. It localises to the chloroplast. This is an uncharacterized protein from Diacronema lutheri (Unicellular marine alga).